Consider the following 347-residue polypeptide: NADH-ubiquinone oxidoreductase chain 2 (347 aa).

Transmembrane regions (helical) follow at residues 3-23, 25-45, 59-79, 111-131, 149-169, 200-220, 242-262, 274-294, and 325-345; these read PPIF…VLIS, HWLL…PILM, YFLT…INLL, FHFW…MILL, INPN…GWGG, LMHL…MLFM, LLIL…GFIP, NMII…YFYM, and LLPP…MMLI.

Belongs to the complex I subunit 2 family. Core subunit of respiratory chain NADH dehydrogenase (Complex I) which is composed of 45 different subunits. Interacts with TMEM242.

The protein localises to the mitochondrion inner membrane. It catalyses the reaction a ubiquinone + NADH + 5 H(+)(in) = a ubiquinol + NAD(+) + 4 H(+)(out). In terms of biological role, core subunit of the mitochondrial membrane respiratory chain NADH dehydrogenase (Complex I) which catalyzes electron transfer from NADH through the respiratory chain, using ubiquinone as an electron acceptor. Essential for the catalytic activity and assembly of complex I. This is NADH-ubiquinone oxidoreductase chain 2 from Ailurus fulgens (Himalayan red panda).